A 327-amino-acid polypeptide reads, in one-letter code: 2-keto-3-deoxygluconate permease (327 aa).

Transmembrane regions (helical) follow at residues 10 to 30, 42 to 62, 73 to 93, 95 to 115, 139 to 159, 163 to 183, 199 to 219, 224 to 244, 254 to 274, and 289 to 309; these read IPGG…TFSP, GMIT…GASI, KSGT…AIAS, IIPE…LALV, AGAF…IILG, IASF…VGFA, VQTL…LTVI, LLGI…LIIA, TAGI…VLIA, and SLVA…TSIW.

The protein belongs to the KdgT transporter family.

The protein localises to the cell inner membrane. The enzyme catalyses 2-dehydro-3-deoxy-D-gluconate(in) + H(+)(in) = 2-dehydro-3-deoxy-D-gluconate(out) + H(+)(out). Catalyzes the proton-dependent uptake of 2-keto-3-deoxygluconate (KDG) into the cell. This chain is 2-keto-3-deoxygluconate permease, found in Escherichia coli O157:H7.